The following is a 95-amino-acid chain: Co-chaperonin GroES (95 aa).

Belongs to the GroES chaperonin family. In terms of assembly, heptamer of 7 subunits arranged in a ring. Interacts with the chaperonin GroEL.

It is found in the cytoplasm. Functionally, together with the chaperonin GroEL, plays an essential role in assisting protein folding. The GroEL-GroES system forms a nano-cage that allows encapsulation of the non-native substrate proteins and provides a physical environment optimized to promote and accelerate protein folding. GroES binds to the apical surface of the GroEL ring, thereby capping the opening of the GroEL channel. The protein is Co-chaperonin GroES of Desulfotalea psychrophila (strain LSv54 / DSM 12343).